We begin with the raw amino-acid sequence, 162 residues long: Cadmium metallothionein (162 aa).

Positions 1–2 (MD) are excised as a propeptide.

The metallothioneins are involved in the cellular sequestration of toxic metal ions. This chain is Cadmium metallothionein (MTT1), found in Tetrahymena thermophila.